A 203-amino-acid polypeptide reads, in one-letter code: uncharacterized protein (203 aa).

3 helical membrane passes run 60–80 (IIDM…FFLY), 114–134 (WFQL…YFCT), and 157–177 (LQLG…ALIL). 192-199 (GAMSEGKT) serves as a coordination point for ATP.

It is found in the membrane. This is an uncharacterized protein from Saccharomyces cerevisiae (strain ATCC 204508 / S288c) (Baker's yeast).